We begin with the raw amino-acid sequence, 193 residues long: dCTP deaminase (193 aa).

Residues 110 to 115 (RSSLAR), Asp128, 136 to 138 (VLE), Tyr171, Lys178, and Gln182 each bind dCTP. Glu138 acts as the Proton donor/acceptor in catalysis. A disordered region spans residues 174–193 (RKNAKYKDQQEAVASRISQD).

This sequence belongs to the dCTP deaminase family. In terms of assembly, homotrimer.

It carries out the reaction dCTP + H2O + H(+) = dUTP + NH4(+). It participates in pyrimidine metabolism; dUMP biosynthesis; dUMP from dCTP (dUTP route): step 1/2. In terms of biological role, catalyzes the deamination of dCTP to dUTP. This is dCTP deaminase from Shewanella sp. (strain W3-18-1).